Reading from the N-terminus, the 332-residue chain is Diaminopimelate epimerase (332 aa).

Residues Asn-13 and Asn-73 each contribute to the substrate site. Cys-82 acts as the Proton donor in catalysis. Residues 83–84 (GN), Asn-172, Asn-209, and 227–228 (ER) each bind substrate. Residue Cys-236 is the Proton acceptor of the active site. 237–238 (GT) lines the substrate pocket.

Belongs to the diaminopimelate epimerase family. In terms of assembly, homodimer.

The protein localises to the cytoplasm. The catalysed reaction is (2S,6S)-2,6-diaminopimelate = meso-2,6-diaminopimelate. It participates in amino-acid biosynthesis; L-lysine biosynthesis via DAP pathway; DL-2,6-diaminopimelate from LL-2,6-diaminopimelate: step 1/1. Its function is as follows. Catalyzes the stereoinversion of LL-2,6-diaminopimelate (L,L-DAP) to meso-diaminopimelate (meso-DAP), a precursor of L-lysine and an essential component of the bacterial peptidoglycan. This is Diaminopimelate epimerase from Lactiplantibacillus plantarum (strain ATCC BAA-793 / NCIMB 8826 / WCFS1) (Lactobacillus plantarum).